Consider the following 248-residue polypeptide: Probable capsular polysaccharide biosynthesis protein YwqC (248 aa).

2 consecutive transmembrane segments (helical) span residues 18-38 and 174-194; these read ILLI…ISFF and LLNI…LAFL.

The protein belongs to the CpsC/CapA family. In terms of processing, not phosphorylated in vitro by YwqD.

The protein localises to the cell membrane. Its pathway is capsule biogenesis; capsule polysaccharide biosynthesis. In terms of biological role, required for YwqD kinase activity. May bring YwqD and its substrates into contact. Probably involved in the regulation of capsular polysaccharide biosynthesis. The polypeptide is Probable capsular polysaccharide biosynthesis protein YwqC (ywqC) (Bacillus subtilis (strain 168)).